A 218-amino-acid chain; its full sequence is Thiopurine S-methyltransferase (218 aa).

Tryptophan 10, leucine 45, glutamate 66, and arginine 123 together coordinate S-adenosyl-L-methionine.

The protein belongs to the class I-like SAM-binding methyltransferase superfamily. TPMT family.

It is found in the cytoplasm. The catalysed reaction is S-adenosyl-L-methionine + a thiopurine = S-adenosyl-L-homocysteine + a thiopurine S-methylether.. This is Thiopurine S-methyltransferase from Shewanella sp. (strain MR-7).